The primary structure comprises 344 residues: Dihydroorotate dehydrogenase (quinone) (344 aa).

FMN-binding positions include alanine 61–lysine 65 and threonine 85. Residue lysine 65 participates in substrate binding. Substrate is bound at residue asparagine 110–phenylalanine 114. Asparagine 138 and asparagine 171 together coordinate FMN. Asparagine 171 lines the substrate pocket. The active-site Nucleophile is serine 174. Residue asparagine 176 participates in substrate binding. FMN contacts are provided by lysine 216 and threonine 244. A substrate-binding site is contributed by asparagine 245–threonine 246. Residues glycine 267, glycine 296, and tyrosine 317–serine 318 each bind FMN.

The protein belongs to the dihydroorotate dehydrogenase family. Type 2 subfamily. In terms of assembly, monomer. FMN serves as cofactor.

The protein resides in the cell membrane. The catalysed reaction is (S)-dihydroorotate + a quinone = orotate + a quinol. It functions in the pathway pyrimidine metabolism; UMP biosynthesis via de novo pathway; orotate from (S)-dihydroorotate (quinone route): step 1/1. Functionally, catalyzes the conversion of dihydroorotate to orotate with quinone as electron acceptor. This Psychrobacter arcticus (strain DSM 17307 / VKM B-2377 / 273-4) protein is Dihydroorotate dehydrogenase (quinone).